The following is an 85-amino-acid chain: MGSVALILKVMPESPDVDLEALKAAMRAKVPSIQDIQEEPIGFGLKALKVMAVVSDQGGETDALEEALSSIEGVERAEIAELTLT.

Belongs to the EF-1-beta/EF-1-delta family.

Promotes the exchange of GDP for GTP in EF-1-alpha/GDP, thus allowing the regeneration of EF-1-alpha/GTP that could then be used to form the ternary complex EF-1-alpha/GTP/AAtRNA. The chain is Elongation factor 1-beta from Methanosphaerula palustris (strain ATCC BAA-1556 / DSM 19958 / E1-9c).